Reading from the N-terminus, the 403-residue chain is Tyrosine--tRNA ligase (403 aa).

A 'HIGH' region motif is present at residues 42–51; that stretch reads PTAPDLHLGH. The 'KMSKS' region motif lies at 226–230; the sequence is KMSKS. An ATP-binding site is contributed by K229. In terms of domain architecture, S4 RNA-binding spans 339–400; sequence LRLAGLLTAA…GKRNFARVSL (62 aa).

It belongs to the class-I aminoacyl-tRNA synthetase family. TyrS type 2 subfamily. Homodimer.

Its subcellular location is the cytoplasm. It carries out the reaction tRNA(Tyr) + L-tyrosine + ATP = L-tyrosyl-tRNA(Tyr) + AMP + diphosphate + H(+). Its function is as follows. Catalyzes the attachment of tyrosine to tRNA(Tyr) in a two-step reaction: tyrosine is first activated by ATP to form Tyr-AMP and then transferred to the acceptor end of tRNA(Tyr). This chain is Tyrosine--tRNA ligase, found in Xanthomonas axonopodis pv. citri (strain 306).